The following is a 104-amino-acid chain: Alpha-amylase inhibitor HOE-467A (104 aa).

Positions 1-30 are cleaved as a signal peptide; the sequence is MRVRALRLAALVGAGAALALSPLAAGPASA. 2 cysteine pairs are disulfide-bonded: C41–C57 and C75–C103.

Its function is as follows. Inhibits mammalian alpha-amylases specifically but has no action on plant and microbial alpha-amylases. Forms a tight stoichiometric 1:1 complex with alpha-amylase. This chain is Alpha-amylase inhibitor HOE-467A, found in Streptomyces tendae.